A 360-amino-acid chain; its full sequence is MDVMDDVKSVLCLKALEASNERASDCIQRAGASIRKIPRIPSIIRVKKKYSTFRVLTDTSHDLLVLVNEGFSDGEYVPINVELELCYEYFTYSEVLRRILPEEVQTPSSFEIVGSIVHLNLDGEQMKHKNIIGRVVHDKTGKTVITKIGQISNAYRSFDLEVIGGDPVLETIHREGDILFCIDYRSVYWCSKLQSERAILAGKFKAGEVLCDPFCGVGPVSLPALKKGCRVYSNDLNLRAIECLEKSIKINRLDPRNIEIFNLSANEFLEKMAGRKIDHFFLNLPEHSLDYLRRISAWEGNPLVHCYFFCRSNEDVVQYIFSRTGLRVDPGMLKVVRKVSPSKYMYKLETSSLFLRRGLG.

Residues R197, 235-236, and N283 each bind S-adenosyl-L-methionine; that span reads DL.

Belongs to the class I-like SAM-binding methyltransferase superfamily. TRM5/TYW2 family. Monomer.

The protein localises to the mitochondrion matrix. The protein resides in the nucleus. Its subcellular location is the cytoplasm. It carries out the reaction guanosine(37) in tRNA + S-adenosyl-L-methionine = N(1)-methylguanosine(37) in tRNA + S-adenosyl-L-homocysteine + H(+). Its function is as follows. Specifically methylates the N1 position of guanosine-37 in various cytoplasmic and mitochondrial tRNAs. Methylation is not dependent on the nature of the nucleoside 5' of the target nucleoside. This is the first step in the biosynthesis of wybutosine (yW), a modified base adjacent to the anticodon of tRNAs and required for accurate decoding. This chain is tRNA (guanine(37)-N(1))-methyltransferase, found in Encephalitozoon cuniculi (strain GB-M1) (Microsporidian parasite).